Consider the following 380-residue polypeptide: Cytochrome b (380 aa).

A run of 4 helical transmembrane segments spans residues 34 to 54, 78 to 99, 114 to 134, and 179 to 199; these read FGSL…LLAM, WLIR…FLHI, WNTG…GYVL, and FFAL…THLM. Residues histidine 84 and histidine 98 each contribute to the heme b site. The heme b site is built by histidine 183 and histidine 197. Histidine 202 provides a ligand contact to a ubiquinone. The next 4 membrane-spanning stretches (helical) occupy residues 227 to 247, 289 to 309, 321 to 341, and 348 to 368; these read LKDI…ALFS, LGGV…PFLH, LSQA…WVGS, and FIII…ILFP.

The protein belongs to the cytochrome b family. The cytochrome bc1 complex contains 11 subunits: 3 respiratory subunits (MT-CYB, CYC1 and UQCRFS1), 2 core proteins (UQCRC1 and UQCRC2) and 6 low-molecular weight proteins (UQCRH/QCR6, UQCRB/QCR7, UQCRQ/QCR8, UQCR10/QCR9, UQCR11/QCR10 and a cleavage product of UQCRFS1). This cytochrome bc1 complex then forms a dimer. Requires heme b as cofactor.

The protein localises to the mitochondrion inner membrane. Functionally, component of the ubiquinol-cytochrome c reductase complex (complex III or cytochrome b-c1 complex) that is part of the mitochondrial respiratory chain. The b-c1 complex mediates electron transfer from ubiquinol to cytochrome c. Contributes to the generation of a proton gradient across the mitochondrial membrane that is then used for ATP synthesis. The protein is Cytochrome b (MT-CYB) of Syrmaticus reevesii (Reeves's pheasant).